We begin with the raw amino-acid sequence, 235 residues long: Uracil-DNA glycosylase (235 aa).

D71 serves as the catalytic Proton acceptor.

This sequence belongs to the uracil-DNA glycosylase (UDG) superfamily. UNG family.

It localises to the cytoplasm. The enzyme catalyses Hydrolyzes single-stranded DNA or mismatched double-stranded DNA and polynucleotides, releasing free uracil.. Its function is as follows. Excises uracil residues from the DNA which can arise as a result of misincorporation of dUMP residues by DNA polymerase or due to deamination of cytosine. The sequence is that of Uracil-DNA glycosylase from Campylobacter hominis (strain ATCC BAA-381 / DSM 21671 / CCUG 45161 / LMG 19568 / NCTC 13146 / CH001A).